Reading from the N-terminus, the 756-residue chain is MLGICRGRRKFLAASLTLLCIPAITWIYLFAGSFEDGKPVSLSPLESQAHSPRYTASSQRERESLEVRVREVEEENRALRRQLSLAQGQSPAHHRGNHSKTYSMEEGTGDSENLRAGIVAGNSSECGQQPAVEKCETIHVAIVCAGYNASRDVVTLVKSVLFHRRNPLHFHLIADSIAEQILATLFQTWMVPAVRVDFYNADELKSEVSWIPNKHYSGIYGLMKLVLTKTLPANLERVIVLDTDITFATDIAELWAVFHKFKGQQVLGLVENQSDWYLGNLWKNHRPWPALGRGYNTGVILLLLDKLRKMKWEQMWRLTAERELMGMLSTSLADQDIFNAVIKQNPFLVYQLPCFWNVQLSDHTRSEQCYRDVSDLKVIHWNSPKKLRVKNKHVEFFRNLYLTFLEYDGNLLRRELFGCPSETDVNNENLQKQLSELDEDDLCYEFRRERFTVHRTHLYFLHYEFEPSADNTDVTLVAQLSMDRLQMLEAICKHWEGPISLALYLSDAEAQQFLRYAQGSEVLMSRQNVGYHIVYKEGQFYPVNLLRNVAMKHISTPYMFLSDIDFLPMYGLYEYLRKSVIQLDLANTKKAMIVPAFETLRYRLSFPKSKAELLSMLDMGTLFTFRYHVWTKGHAPTNFAKWRTATTPYQVEWEADFEPYVVVRRDCPEYDRRFVGFGWNKVAHIMELDAQEYEFTVLPNAYMIHMPHAPSFDITKFRSNKQYRICLKTLKEEFQQDMSRRYGFAALKYLTAENNS.

The Cytoplasmic portion of the chain corresponds to 1–10 (MLGICRGRRK). Residues 11-31 (FLAASLTLLCIPAITWIYLFA) form a helical; Signal-anchor for type II membrane protein membrane-spanning segment. Residues 32–756 (GSFEDGKPVS…LKYLTAENNS (725 aa)) are Lumenal-facing. Disordered stretches follow at residues 43-64 (SPLE…ERES) and 82-108 (QLSL…EEGT). The segment covering 44–58 (PLESQAHSPRYTASS) has biased composition (polar residues). Residues 53–95 (RYTASSQRERESLEVRVREVEEENRALRRQLSLAQGQSPAHHR) adopt a coiled-coil conformation. N-linked (GlcNAc...) asparagine glycosylation is found at Asn97, Asn122, and Asn148. Residues 138 to 413 (IHVAIVCAGY…FLEYDGNLLR (276 aa)) are xylosyltransferase activity. Mn(2+) is bound by residues Asp242 and Asp244. Asn272 is a glycosylation site (N-linked (GlcNAc...) asparagine). Residues 414 to 756 (RELFGCPSET…LKYLTAENNS (343 aa)) form a glucuronyltransferase activity region. Residues Asp563 and Asp565 each contribute to the Mn(2+) site.

This sequence in the C-terminal section; belongs to the glycosyltransferase 49 family. The protein in the N-terminal section; belongs to the glycosyltransferase 8 family. In terms of assembly, interacts with DAG1 (via the N-terminal domain of alpha-DAG1); the interaction increases binding of DAG1 to laminin. Interacts with B4GAT1. Mn(2+) is required as a cofactor. As to expression, ubiquitous. Highest expression in heart, diaphragm and brain, where it is especially found in cerebral cortex, hippocampus, and trigeminal ganglion.

The protein resides in the golgi apparatus membrane. It carries out the reaction 3-O-[beta-D-GlcA-(1-&gt;3)-beta-D-Xyl-(1-&gt;4)-Rib-ol-P-Rib-ol-P-3-beta-D-GalNAc-(1-&gt;3)-beta-D-GlcNAc-(1-&gt;4)-(O-6-P-alpha-D-Man)]-Thr-[protein] + UDP-alpha-D-xylose = 3-O-[alpha-D-Xyl-(1-&gt;3)-beta-D-GlcA-(1-&gt;4)-beta-D-Xyl-(1-&gt;4)-Rib-ol-P-Rib-ol-P-3-beta-D-GalNAc-(1-&gt;3)-beta-D-GlcNAc-(1-&gt;4)-(O-6-P-alpha-D-Man)]-Thr-[protein] + UDP + H(+). It catalyses the reaction 3-O-{(1-&gt;[3)-alpha-D-Xyl-(1-&gt;3)-beta-D-GlcA-(1-&gt;](n)-4)-beta-D-Xyl-(1-&gt;4)-Rib-ol-P-Rib-ol-P-3-beta-D-GalNAc-(1-&gt;3)-beta-D-GlcNAc-(1-&gt;4)-O-6-P-alpha-D-Man}-L-Thr-[protein] + UDP-alpha-D-glucuronate = 3-O-{beta-D-GlcA-(1-&gt;[3)-alpha-D-Xyl-(1-&gt;3)-beta-D-GlcA-(1-&gt;](n)-4)-beta-D-Xyl-(1-&gt;4)-Rib-ol-P-Rib-ol-P-3-beta-D-GalNAc-(1-&gt;3)-beta-D-GlcNAc-(1-&gt;4)-O-6-P-alpha-D-Man}-L-Thr-[protein] + UDP + H(+). The catalysed reaction is 3-O-{beta-D-GlcA-(1-&gt;[3)-alpha-D-Xyl-(1-&gt;3)-beta-D-GlcA-(1-&gt;](n)-4)-beta-D-Xyl-(1-&gt;4)-Rib-ol-P-Rib-ol-P-3-beta-D-GalNAc-(1-&gt;3)-beta-D-GlcNAc-(1-&gt;4)-O-6-P-alpha-D-Man}-L-Thr-[protein] + UDP-alpha-D-xylose = 3-O-{(1-&gt;[3)-alpha-D-Xyl-(1-&gt;3)-beta-D-GlcA-(1-&gt;](n+1)-4)-beta-D-Xyl-(1-&gt;4)-Rib-ol-P-Rib-ol-P-3-beta-D-GalNAc-(1-&gt;3)-beta-D-GlcNAc-(1-&gt;4)-O-6-P-alpha-D-Man}-L-Thr-[protein] + UDP + H(+). It participates in protein modification; protein glycosylation. Its function is as follows. Bifunctional glycosyltransferase with both alpha-1,3-xylosyltransferase and beta-1,3-glucuronyltransferase activities involved in the maturation of alpha-dystroglycan (DAG1) by glycosylation leading to DAG1 binding to laminin G-like domain-containing extracellular proteins with high affinity. Elongates the glucuronyl-beta-1,4-xylose-beta disaccharide primer structure initiated by B4GAT1 by adding repeating units [-3-Xylose-alpha-1,3-GlcA-beta-1-] to produce a heteropolysaccharide. Requires the phosphorylation of core M3 (O-mannosyl trisaccharide) by POMK to elongate the glucuronyl-beta-1,4-xylose-beta disaccharide primer. Plays a key role in skeletal muscle function and regeneration. In Mus musculus (Mouse), this protein is Xylosyl- and glucuronyltransferase LARGE1.